The chain runs to 393 residues: Bone morphogenetic protein 15 (393 aa).

Positions 1-25 (MVLLSILRILLWGLVLFMEHRVQMT) are cleaved as a signal peptide. Positions 26-268 (QVGQPSIAHL…DPSLLLRRAR (243 aa)) are excised as a propeptide. N-linked (GlcNAc...) asparagine glycosylation is found at Asn86 and Asn237. 3 disulfides stabilise this stretch: Cys292–Cys358, Cys321–Cys390, and Cys325–Cys392. N-linked (GlcNAc...) asparagine glycosylation is present at Asn374.

The protein belongs to the TGF-beta family. In terms of assembly, homodimer. But, in contrast to other members of this family, cannot be disulfide-linked.

It localises to the secreted. May be involved in follicular development. Oocyte-specific growth/differentiation factor that stimulates folliculogenesis and granulosa cell (GC) growth. This chain is Bone morphogenetic protein 15 (BMP15), found in Ovis aries (Sheep).